A 109-amino-acid polypeptide reads, in one-letter code: MAQFEWVHAAWLALAIVLEIVANVFLKFSDGFRCKIFGLLSLAAVLAAFSALSQAVKGIDLSVAYALWGGFGIAATLAAGWILFGQRLNRKGWIGLVLLLAGMIMVKLA.

The next 4 helical transmembrane spans lie at 6 to 26 (WVHAAWLALAIVLEIVANVFL), 36 to 56 (IFGLLSLAAVLAAFSALSQAV), 64 to 84 (AYALWGGFGIAATLAAGWILF), and 88 to 108 (LNRKGWIGLVLLLAGMIMVKL).

It belongs to the drug/metabolite transporter (DMT) superfamily. Small multidrug resistance (SMR) (TC 2.A.7.1) family. MdtI subfamily. Forms a complex with MdtJ.

It is found in the cell inner membrane. In terms of biological role, catalyzes the excretion of spermidine. The protein is Spermidine export protein MdtI of Escherichia coli O81 (strain ED1a).